A 188-amino-acid polypeptide reads, in one-letter code: UPF0397 protein LCK_00164 (188 aa).

5 consecutive transmembrane segments (helical) span residues 15–35, 48–68, 79–99, 121–141, and 154–174; these read VVAT…IAIP, GWLA…VGLI, GAPW…LGFG, WQAV…DIII, and AVTT…LLVA.

Belongs to the UPF0397 family.

The protein resides in the cell membrane. In Leuconostoc citreum (strain KM20), this protein is UPF0397 protein LCK_00164.